Here is a 419-residue protein sequence, read N- to C-terminus: Serine--tRNA ligase (419 aa).

226–228 (TSE) serves as a coordination point for L-serine. ATP contacts are provided by residues 257–259 (RRE) and valine 273. An L-serine-binding site is contributed by glutamate 280. 344-347 (ELTS) lines the ATP pocket. Residue threonine 379 coordinates L-serine.

The protein belongs to the class-II aminoacyl-tRNA synthetase family. Type-1 seryl-tRNA synthetase subfamily. As to quaternary structure, homodimer. The tRNA molecule binds across the dimer.

It is found in the cytoplasm. It carries out the reaction tRNA(Ser) + L-serine + ATP = L-seryl-tRNA(Ser) + AMP + diphosphate + H(+). The enzyme catalyses tRNA(Sec) + L-serine + ATP = L-seryl-tRNA(Sec) + AMP + diphosphate + H(+). Its pathway is aminoacyl-tRNA biosynthesis; selenocysteinyl-tRNA(Sec) biosynthesis; L-seryl-tRNA(Sec) from L-serine and tRNA(Sec): step 1/1. Functionally, catalyzes the attachment of serine to tRNA(Ser). Is also able to aminoacylate tRNA(Sec) with serine, to form the misacylated tRNA L-seryl-tRNA(Sec), which will be further converted into selenocysteinyl-tRNA(Sec). The sequence is that of Serine--tRNA ligase from Mycolicibacterium vanbaalenii (strain DSM 7251 / JCM 13017 / BCRC 16820 / KCTC 9966 / NRRL B-24157 / PYR-1) (Mycobacterium vanbaalenii).